The primary structure comprises 149 residues: uncharacterized protein (149 aa).

The segment at 34–94 (HTPCLPKVPR…NPIGSQRIHS (61 aa)) is disordered. Residues 56-66 (QSPHRQGDRRR) are compositionally biased toward basic and acidic residues.

It localises to the mitochondrion. This is an uncharacterized protein from Arabidopsis thaliana (Mouse-ear cress).